Reading from the N-terminus, the 357-residue chain is Glutamine synthetase root isozyme B (357 aa).

Residues 19-99 (IIAEYIWVGG…VICDVYTPAG (81 aa)) form the GS beta-grasp domain. In terms of domain architecture, GS catalytic spans 106 to 357 (KRYNAAKIFS…AETTILWKKS (252 aa)).

The protein belongs to the glutamine synthetase family. As to quaternary structure, homooctamer.

It is found in the cytoplasm. The catalysed reaction is L-glutamate + NH4(+) + ATP = L-glutamine + ADP + phosphate + H(+). The polypeptide is Glutamine synthetase root isozyme B (GS3B) (Pisum sativum (Garden pea)).